The chain runs to 442 residues: Trigger factor (442 aa).

In terms of domain architecture, PPIase FKBP-type spans 176-259 (GDFISLSLYV…VNAVIEISSP (84 aa)).

It belongs to the FKBP-type PPIase family. Tig subfamily.

It is found in the cytoplasm. It catalyses the reaction [protein]-peptidylproline (omega=180) = [protein]-peptidylproline (omega=0). Involved in protein export. Acts as a chaperone by maintaining the newly synthesized protein in an open conformation. Functions as a peptidyl-prolyl cis-trans isomerase. The protein is Trigger factor of Chlamydia trachomatis serovar L2 (strain ATCC VR-902B / DSM 19102 / 434/Bu).